We begin with the raw amino-acid sequence, 382 residues long: UDP-N-acetylglucosamine--N-acetylmuramyl-(pentapeptide) pyrophosphoryl-undecaprenol N-acetylglucosamine transferase (382 aa).

UDP-N-acetyl-alpha-D-glucosamine is bound by residues 17 to 19 (TAG), asparagine 137, arginine 179, serine 213, and glutamine 308.

It belongs to the glycosyltransferase 28 family. MurG subfamily.

It is found in the cell membrane. The catalysed reaction is di-trans,octa-cis-undecaprenyl diphospho-N-acetyl-alpha-D-muramoyl-L-alanyl-D-glutamyl-meso-2,6-diaminopimeloyl-D-alanyl-D-alanine + UDP-N-acetyl-alpha-D-glucosamine = di-trans,octa-cis-undecaprenyl diphospho-[N-acetyl-alpha-D-glucosaminyl-(1-&gt;4)]-N-acetyl-alpha-D-muramoyl-L-alanyl-D-glutamyl-meso-2,6-diaminopimeloyl-D-alanyl-D-alanine + UDP + H(+). The protein operates within cell wall biogenesis; peptidoglycan biosynthesis. Cell wall formation. Catalyzes the transfer of a GlcNAc subunit on undecaprenyl-pyrophosphoryl-MurNAc-pentapeptide (lipid intermediate I) to form undecaprenyl-pyrophosphoryl-MurNAc-(pentapeptide)GlcNAc (lipid intermediate II). The sequence is that of UDP-N-acetylglucosamine--N-acetylmuramyl-(pentapeptide) pyrophosphoryl-undecaprenol N-acetylglucosamine transferase from Rhodococcus opacus (strain B4).